Reading from the N-terminus, the 586-residue chain is Actin-related protein 9 (586 aa).

The segment at 141-169 (STPIVDKDADVDPLQRSTPDDTEPNSEEN) is disordered.

It belongs to the actin family. ARP8 subfamily.

The chain is Actin-related protein 9 (ARP9) from Oryza sativa subsp. indica (Rice).